Here is a 127-residue protein sequence, read N- to C-terminus: Gonadotropin subunit beta-1 (127 aa).

A signal peptide spans 1–22; sequence MHLAVTALCLTLAPVLARASTS. Cystine bridges form between Cys23–Cys71, Cys37–Cys86, Cys40–Cys124, Cys48–Cys102, Cys52–Cys104, and Cys107–Cys114. N-linked (GlcNAc...) asparagine glycosylation is found at Asn27 and Asn44.

This sequence belongs to the glycoprotein hormones subunit beta family. Heterodimer of an alpha and a beta chain.

The protein resides in the secreted. Functionally, involved in gametogenesis and steroidogenesis. The protein is Gonadotropin subunit beta-1 (cgba) of Anguilla japonica (Japanese eel).